A 128-amino-acid polypeptide reads, in one-letter code: Sulfurtransferase TusD (128 aa).

Cys78 acts as the Cysteine persulfide intermediate in catalysis.

It belongs to the DsrE/TusD family. As to quaternary structure, heterohexamer, formed by a dimer of trimers. The hexameric TusBCD complex contains 2 copies each of TusB, TusC and TusD. The TusBCD complex interacts with TusE.

Its subcellular location is the cytoplasm. Part of a sulfur-relay system required for 2-thiolation of 5-methylaminomethyl-2-thiouridine (mnm(5)s(2)U) at tRNA wobble positions. Accepts sulfur from TusA and transfers it in turn to TusE. The polypeptide is Sulfurtransferase TusD (Salmonella typhi).